A 92-amino-acid polypeptide reads, in one-letter code: MPFVPVETPKCPACGKSVYAAEERVAGGYKFHKTCFKCSMCNKALDSTNCTEHEKELFCKNCHGRKYGPKGYGFGGGAGCLSTDTGAHLNRE.

An LIM zinc-binding domain is found at 11 to 62 (CPACGKSVYAAEERVAGGYKFHKTCFKCSMCNKALDSTNCTEHEKELFCKNC). The Nuclear localization signal signature appears at 65–70 (RKYGPK).

In the embryo, expression is restricted to the somatic, visceral, and pharyngeal muscles. Within the somatic musculature, MLP60 is distributed throughout the muscle fibers. There is no expression in cardiac mesoderm or in fat body.

It is found in the cytoplasm. It localises to the nucleus. Positive regulator of myogenesis. This Drosophila melanogaster (Fruit fly) protein is Muscle LIM protein 1 (Mlp60A).